Here is a 345-residue protein sequence, read N- to C-terminus: Lysine-specific demethylase JMJ32 (345 aa).

Positions 122–315 (GYLQQQNDCF…IKYAYFNFLQ (194 aa)) constitute a JmjC domain. Positions 174, 176, and 281 each coordinate Fe cation.

The protein belongs to the JARID1 histone demethylase family. The cofactor is Fe(2+). As to expression, expressed ubiquitously including in vasculatures, leaves, siliques, roots and inflorescences. Present in the root meristem. Accumulates in cotyledons and root tips of young seedlings.

Its subcellular location is the nucleus. The protein resides in the cytoplasm. It is found in the endoplasmic reticulum. It carries out the reaction N(6),N(6),N(6)-trimethyl-L-lysyl(27)-[histone H3] + 2-oxoglutarate + O2 = N(6),N(6)-dimethyl-L-lysyl(27)-[histone H3] + formaldehyde + succinate + CO2. It catalyses the reaction N(6),N(6)-dimethyl-L-lysyl(27)-[histone H3] + 2-oxoglutarate + O2 = N(6)-methyl-L-lysyl(27)-[histone H3] + formaldehyde + succinate + CO2. The catalysed reaction is N(6),N(6),N(6)-trimethyl-L-lysyl(27)-[histone H3] + 2 2-oxoglutarate + 2 O2 = N(6)-methyl-L-lysyl(27)-[histone H3] + 2 formaldehyde + 2 succinate + 2 CO2. Histone demethylase that demethylates 'Lys-27' (H3K27me) of histone H3 with a specific activity for H3K27me3 and H3K27me2, and involved in the regulation of gene expression. No activity on H3K27me1. Together with JMJ30, regulates the flowering-repressor FLOWERING LOCUS C (FLC) locus by removing the repressive histone modification H3 lysine 27 trimethylation (H3K27me3), especially at elevated temperatures (e.g. 29 degrees Celsius), thus preventing extreme precocious flowering. JMJ30 and JMJ32 are regulators involved in the integration of abscisic acid (ABA) and brassinosteroids (BR) signaling pathways. Together with JMJ30, controls ABA-mediated growth arrest during the post-germination stage in unfavorable conditions, and responses to ABA during root development, via the removal of repressive histone mark (H3K27me3) from the SnRK2.8 promoter, thus promoting SnRK2.8 expression and subsequent kinase-dependent ABI3 activation. In addition, removes the repressive histone marks (H3K27me3) from the BZR1 locus in response to stress and ABA, thus activating the BR signaling pathway which, in turn, inhibits the ABA signaling pathway. The sequence is that of Lysine-specific demethylase JMJ32 from Arabidopsis thaliana (Mouse-ear cress).